The chain runs to 270 residues: GHMVNAIAQIDEFVNLGANSIETDVSFDKNANPEYTYHGIPCDCGRTCTKWEYFNTFLGGLRKATTPGDSKYHEKLVLVVFDLKTGSLYDNQAYDAGTKLAKSLLQNYWNKGNNGGRAYIVLSIPNLDHYKLITGFKETLTKEEHPELMDKVGYDFSGNDDIGDVAKAYKKAGVTGHVWQSDGITNCLLRGLDRVRKAVANRDSSNGYINKVYYWTVDKRASTRDALDAGVDGIMTNYPDVIADVLSESAYTAKFRIATYDDNPWETFKN.

Residue His-2 is part of the active site. Mg(2+) contacts are provided by Glu-22 and Asp-24. His-38 (nucleophile) is an active-site residue. Disulfide bonds link Cys-42–Cys-48 and Cys-44–Cys-187. Asp-82 serves as a coordination point for Mg(2+).

This sequence belongs to the arthropod phospholipase D family. Class II subfamily. The cofactor is Mg(2+). Expressed by the venom gland.

Its subcellular location is the secreted. It catalyses the reaction an N-(acyl)-sphingosylphosphocholine = an N-(acyl)-sphingosyl-1,3-cyclic phosphate + choline. It carries out the reaction an N-(acyl)-sphingosylphosphoethanolamine = an N-(acyl)-sphingosyl-1,3-cyclic phosphate + ethanolamine. The enzyme catalyses a 1-acyl-sn-glycero-3-phosphocholine = a 1-acyl-sn-glycero-2,3-cyclic phosphate + choline. The catalysed reaction is a 1-acyl-sn-glycero-3-phosphoethanolamine = a 1-acyl-sn-glycero-2,3-cyclic phosphate + ethanolamine. Functionally, dermonecrotic toxins cleave the phosphodiester linkage between the phosphate and headgroup of certain phospholipids (sphingolipid and lysolipid substrates), forming an alcohol (often choline) and a cyclic phosphate. This toxin acts on sphingomyelin (SM). It may also act on ceramide phosphoethanolamine (CPE), lysophosphatidylcholine (LPC) and lysophosphatidylethanolamine (LPE), but not on lysophosphatidylserine (LPS), and lysophosphatidylglycerol (LPG). It acts by transphosphatidylation, releasing exclusively cyclic phosphate products as second products. Induces dermonecrosis, hemolysis, increased vascular permeability, edema, inflammatory response, and platelet aggregation. This Loxosceles sabina (Tucson recluse spider) protein is Dermonecrotic toxin LsaSicTox-alphaIB1av.